A 131-amino-acid polypeptide reads, in one-letter code: Profilin-1 (131 aa).

This sequence belongs to the profilin family. In terms of assembly, occurs in many kinds of cells as a complex with monomeric actin in a 1:1 ratio. As to expression, expressed at low levels roots, leaves, stems, flowers and siliques. Expressed in leaf epidermal cells, trichomes and stem epidermal cells. Detected in phloem exudates (at protein level).

Its subcellular location is the cytoplasm. The protein localises to the cytoskeleton. In terms of biological role, binds to actin monomers and regulates the organization of the actin cytoskeleton. At high concentrations, profilin prevents the polymerization of actin, whereas it enhances it at low concentrations. At low concentrations, associates with the poly-proline motif of formins to enhance actin filament elongation rate. Binds ACT1, ACT7 and ACT11 and inhibits actin polymerization. Coordinates the stochastic dynamic properties of actin filaments by modulating formin-mediated actin nucleation and assembly during axial cell expansion. Binds G-actin and poly-L-proline in vitro. Inhibits cell growth of various pathogenic fungal strains. May play a role as antifungal proteins in the defense system against fungal pathogen attacks. The protein is Profilin-1 of Arabidopsis thaliana (Mouse-ear cress).